We begin with the raw amino-acid sequence, 180 residues long: MANLKTKYQQEVAPALQKQFNYKNVMMIPRLEKIVINVGLGEAVQNAKALDAAVADIAAIAGQRPVITRAKKSISSFKIRTGMPIGCKVTLRGERMWDFLEKLIYVALPRVRDFRGVSPKSFDGRGNYALGLKEQLLFPEIDYDKVDKIRGMDVIIVTTAKTDEEAKALLKGLGMPFAER.

The protein belongs to the universal ribosomal protein uL5 family. In terms of assembly, part of the 50S ribosomal subunit; part of the 5S rRNA/L5/L18/L25 subcomplex. Contacts the 5S rRNA and the P site tRNA. Forms a bridge to the 30S subunit in the 70S ribosome.

This is one of the proteins that bind and probably mediate the attachment of the 5S RNA into the large ribosomal subunit, where it forms part of the central protuberance. In the 70S ribosome it contacts protein S13 of the 30S subunit (bridge B1b), connecting the 2 subunits; this bridge is implicated in subunit movement. Contacts the P site tRNA; the 5S rRNA and some of its associated proteins might help stabilize positioning of ribosome-bound tRNAs. The protein is Large ribosomal subunit protein uL5 of Symbiobacterium thermophilum (strain DSM 24528 / JCM 14929 / IAM 14863 / T).